The following is a 1322-amino-acid chain: Sal-like protein 1 (1322 aa).

The tract at residues 1-41 (MSRRKQAKPQHFQSDPEVASLPRRDGDTEKGQPSRPTKSKD) is disordered. The segment covering 22-41 (PRRDGDTEKGQPSRPTKSKD) has biased composition (basic and acidic residues). Residues 43 to 65 (HVCGRCCAEFFELSDLLLHKKSC) form a C2H2-type 1; atypical zinc finger. The disordered stretch occupies residues 78–128 (PASPAKTFPPGPSLNDPDDQMKDAANKADQEDCSDLSEPKGLDREESMEVE). Basic and acidic residues-rich tracts occupy residues 96-107 (DQMKDAANKADQ) and 114-124 (SEPKGLDREES). K440 participates in a covalent cross-link: Glycyl lysine isopeptide (Lys-Gly) (interchain with G-Cter in SUMO2). 2 consecutive C2H2-type zinc fingers follow at residues 450–472 (HKCRFCAKVFGSDSALQIHLRSH) and 478–500 (FKCNICGNRFSTKGNLKVHFQRH). Residues 578 to 659 (PIPISHSAAS…GGPGGTTFTN (82 aa)) are disordered. Residues 584 to 594 (SAASPQGSVKS) show a composition bias toward polar residues. 3 positions are modified to phosphoserine: S591, S594, and S596. The span at 629 to 645 (NMASSAVPTAGNSTLNS) shows a compositional bias: polar residues. Glycyl lysine isopeptide (Lys-Gly) (interchain with G-Cter in SUMO2) cross-links involve residues K672, K689, and K700. C2H2-type zinc fingers lie at residues 705 to 727 (NECIICHRVLSCQSALKMHYRTH), 733 to 755 (FKCKICGRAFTTKGNLKTHYSVH), and 765 to 787 (HSCPICQKKFTNAVVLQQHIRMH). Disordered stretches follow at residues 789–855 (GGQI…SSPL) and 891–961 (SMEG…GLSP). Positions 819–832 (DLDNFSDENMEECP) are enriched in acidic residues. A compositionally biased stretch (low complexity) spans 842–855 (SADASQDSLSSSPL). Over residues 898 to 935 (TNDSSSVGGDMESQSAGSPAISESTSSMQALSPSNSTQ) the composition is skewed to polar residues. Residues 936 to 948 (EFHKSPGMEEKPQ) are compositionally biased toward basic and acidic residues. At S940 the chain carries Phosphoserine. Residues K946 and K981 each participate in a glycyl lysine isopeptide (Lys-Gly) (interchain with G-Cter in SUMO2) cross-link. C2H2-type zinc fingers lie at residues 1000 to 1022 (TACDICGKTFACQSALDIHYRSH) and 1028 to 1050 (FICTVCNRGFSTKGNLKQHMLTH). A Glycyl lysine isopeptide (Lys-Gly) (interchain with G-Cter in SUMO2) cross-link involves residue K1085. A disordered region spans residues 1094–1119 (VSPQDSKDAPTSHVPQGPLSSSATSP). 2 C2H2-type zinc fingers span residues 1133–1155 (HYCNTCGKTFSSSSALQIHERTH) and 1161–1183 (FACTICGRAFTTKGNLKVHMGTH). Residues K1218, K1297, and K1317 each participate in a glycyl lysine isopeptide (Lys-Gly) (interchain with G-Cter in SUMO2) cross-link.

Belongs to the sal C2H2-type zinc-finger protein family. As to quaternary structure, may associate with NuRD histone deacetylase complex (HDAC). Interacts with components of HDAC complex including HDAC1, HDAC2, RBBP4, RBPP7, MTA1 and MTA2. Interacts with CCNQ. Interacts with NSD2 (via PHD-type zinc fingers 1, 2 and 3). As to expression, expressed in the metanephric mesenchyme surrounding ureteric bud.

Its subcellular location is the nucleus. In terms of biological role, transcriptional repressor involved in organogenesis. Plays an essential role in ureteric bud invasion during kidney development. This chain is Sal-like protein 1 (Sall1), found in Mus musculus (Mouse).